Consider the following 363-residue polypeptide: MSSPATTITFFFFFTLSSFFYITSSLQNNNNNKHTATVNSLNIPSAAAEITLVNPKLPPRSLSLTSSKKFEGSSNLVHLRYHMGPVLSSSPINIYVIWYGQWSRPHKSLIRDFLNSISDAKAPSPSVSEWWRTASLYTDQTGSNVSRSVLIAGEYSDSKYSHGQHLTRLTIQEVIASAARSASFPVDHKNGMYLVLTSHDVTMQDFCRAVCGFHYFTFPSMVGYTMPYAWVGQSGKQCPEVCAYPFALPGYMGHGGPGELRPPNGETGVDGMVSVIGHELAEVVSNPLINAWYAGEDPTAPTEIGDLCEGLYGSGGGGGYIGQVMRDREGKTFNMNGKGGRKFLVQWIWNPNLKACSGPNSVD.

The signal sequence occupies residues 1–25 (MSSPATTITFFFFFTLSSFFYITSS). The N-linked (GlcNAc...) asparagine glycan is linked to N144.

It belongs to the EXORDIUM family.

Its subcellular location is the secreted. The protein resides in the extracellular space. It localises to the apoplast. In terms of biological role, may play a role in a brassinosteroid-dependent regulation of growth and development. This is Protein EXORDIUM-like 5 (EXL5) from Arabidopsis thaliana (Mouse-ear cress).